The sequence spans 64 residues: Large ribosomal subunit protein bL33 (64 aa).

The protein belongs to the bacterial ribosomal protein bL33 family.

This chain is Large ribosomal subunit protein bL33, found in Nostoc sp. (strain PCC 7120 / SAG 25.82 / UTEX 2576).